Here is a 334-residue protein sequence, read N- to C-terminus: L-lactate dehydrogenase B chain (334 aa).

A2 carries the N-acetylalanine modification. K7 is modified (N6-acetyllysine). Position 44 is a phosphoserine (S44). Residues 53 to 58 (DVLEDK) and R100 contribute to the NAD(+) site. An N6-acetyllysine modification is found at K58. R107 serves as a coordination point for substrate. N6-acetyllysine is present on K119. NAD(+) is bound at residue N139. 2 residues coordinate substrate: N139 and R170. H194 functions as the Proton acceptor in the catalytic mechanism. Y240 bears the Phosphotyrosine mark. T249 is a binding site for substrate. K329 carries the post-translational modification N6-acetyllysine.

The protein belongs to the LDH/MDH superfamily. LDH family. As to quaternary structure, homotetramer. Interacts with PTEN upstream reading frame protein MP31; the interaction leads to inhibition of mitochondrial lactate dehydrogenase activity, preventing conversion of lactate to pyruvate in mitochondria.

The protein resides in the cytoplasm. It is found in the mitochondrion inner membrane. The catalysed reaction is (S)-lactate + NAD(+) = pyruvate + NADH + H(+). Its pathway is fermentation; pyruvate fermentation to lactate; (S)-lactate from pyruvate: step 1/1. In terms of biological role, interconverts simultaneously and stereospecifically pyruvate and lactate with concomitant interconversion of NADH and NAD(+). The protein is L-lactate dehydrogenase B chain (LDHB) of Monodelphis domestica (Gray short-tailed opossum).